The sequence spans 223 residues: Class E basic helix-loop-helix protein 23 (223 aa).

The tract at residues 32-93 (PETTRGFGAS…GVAVDARRRP (62 aa)) is disordered. Residues 98-152 (SLRLSINARERRRMHDLNDALDGLRAVIPYAHSPSVRKLSKIATLLLAKNYILMQ) enclose the bHLH domain.

In terms of tissue distribution, expressed in brain and retina.

It localises to the nucleus. May function as transcriptional repressor. May modulate the expression of genes required for the differentiation and/or maintenance of pancreatic and neuronal cell types. May be important for rod bipolar cell maturation. The polypeptide is Class E basic helix-loop-helix protein 23 (Bhlhe23) (Mus musculus (Mouse)).